The primary structure comprises 165 residues: Immunity protein YokJ (165 aa).

As to quaternary structure, probably interacts with cognate toxin YokI but not with other non-cognate toxins. The interaction inhibits the toxic activity of YokI.

The protein resides in the cytoplasm. Functionally, immunity component of one of 6 LXG toxin-immunity modules in this strain. They promote kin selection, mediate competition in biofilms, and drive spatial segregation of different strains, indicating that LXG toxins may help avoid warfare between strains in biofilms. Mediates intercellular competition during biofilm formation; disruption of the operon disadvantages the bacteria, but overexpression of the cognate immunity protein restores growth in competition with wild-type. In situ neutralizes the toxic effect of cognate toxin YokI. Neutralizes the ability to inhibit growth of cognate toxin YokI upon expression in E.coli. Does not have immunity protein activity on other LXG toxins. In Bacillus subtilis (strain 168), this protein is Immunity protein YokJ (yokJ).